Reading from the N-terminus, the 152-residue chain is MADSERLSAPGCWLACTSFSRTKKGILLFAEIILCLVILICFSASTTSAYSSLSVIEMICAAVLLVFYTCDLHSKISFINWPWTDFFRSLIATILYLITSIVVLVEGRGSSRVVAGILGLLATLLFGYDAYITFPLKQQRHTAAPTDPTDGP.

Positions 19-138 constitute an MARVEL domain; sequence FSRTKKGILL…DAYITFPLKQ (120 aa). The next 4 membrane-spanning stretches (helical) occupy residues 25-45, 48-68, 85-105, and 112-132; these read GILL…FSAS, SAYS…LVFY, DFFR…VVLV, and RVVA…DAYI.

It is found in the membrane. In terms of biological role, may play a role in cell differentiation in the intestinal epithelium. The sequence is that of Proteolipid protein 2 (Plp2) from Mus musculus (Mouse).